We begin with the raw amino-acid sequence, 714 residues long: ATP-dependent DNA helicase DinG (714 aa).

The region spanning 17-294 is the Helicase ATP-binding domain; that stretch reads ALQDQIPDFI…TCMEQFRPKT (278 aa). Residue 54–61 participates in ATP binding; sequence APTGVGKT. Positions 120, 194, 199, and 205 each coordinate [4Fe-4S] cluster. Positions 248-251 match the DEAH box motif; sequence DEGH. In terms of domain architecture, Helicase C-terminal spans 517 to 698; it reads HIAEMAAYFR…VFPIEQPAVP (182 aa).

It belongs to the helicase family. DinG subfamily. Type 1 sub-subfamily. It depends on [4Fe-4S] cluster as a cofactor.

The enzyme catalyses Couples ATP hydrolysis with the unwinding of duplex DNA at the replication fork by translocating in the 5'-3' direction. This creates two antiparallel DNA single strands (ssDNA). The leading ssDNA polymer is the template for DNA polymerase III holoenzyme which synthesizes a continuous strand.. The catalysed reaction is ATP + H2O = ADP + phosphate + H(+). Functionally, DNA-dependent ATPase and 5'-3' DNA helicase. Unwinds D-loops, R-loops, forked DNA and G-quadruplex DNA. This Salmonella typhimurium (strain LT2 / SGSC1412 / ATCC 700720) protein is ATP-dependent DNA helicase DinG.